Consider the following 477-residue polypeptide: Aspartyl/glutamyl-tRNA(Asn/Gln) amidotransferase subunit B (477 aa).

Belongs to the GatB/GatE family. GatB subfamily. In terms of assembly, heterotrimer of A, B and C subunits.

It catalyses the reaction L-glutamyl-tRNA(Gln) + L-glutamine + ATP + H2O = L-glutaminyl-tRNA(Gln) + L-glutamate + ADP + phosphate + H(+). It carries out the reaction L-aspartyl-tRNA(Asn) + L-glutamine + ATP + H2O = L-asparaginyl-tRNA(Asn) + L-glutamate + ADP + phosphate + 2 H(+). Functionally, allows the formation of correctly charged Asn-tRNA(Asn) or Gln-tRNA(Gln) through the transamidation of misacylated Asp-tRNA(Asn) or Glu-tRNA(Gln) in organisms which lack either or both of asparaginyl-tRNA or glutaminyl-tRNA synthetases. The reaction takes place in the presence of glutamine and ATP through an activated phospho-Asp-tRNA(Asn) or phospho-Glu-tRNA(Gln). This is Aspartyl/glutamyl-tRNA(Asn/Gln) amidotransferase subunit B from Bdellovibrio bacteriovorus (strain ATCC 15356 / DSM 50701 / NCIMB 9529 / HD100).